We begin with the raw amino-acid sequence, 160 residues long: Cyclic pyranopterin monophosphate synthase (160 aa).

Residues 75-77 and 113-114 each bind substrate; these read LCH and ME. Residue aspartate 128 is part of the active site.

This sequence belongs to the MoaC family. As to quaternary structure, homohexamer; trimer of dimers.

The enzyme catalyses (8S)-3',8-cyclo-7,8-dihydroguanosine 5'-triphosphate = cyclic pyranopterin phosphate + diphosphate. It functions in the pathway cofactor biosynthesis; molybdopterin biosynthesis. Catalyzes the conversion of (8S)-3',8-cyclo-7,8-dihydroguanosine 5'-triphosphate to cyclic pyranopterin monophosphate (cPMP). This chain is Cyclic pyranopterin monophosphate synthase, found in Methylobacterium nodulans (strain LMG 21967 / CNCM I-2342 / ORS 2060).